Consider the following 200-residue polypeptide: Nucleoplasmin (200 aa).

A2 bears the N-acetylalanine mark. Position 3 is a phosphoserine (S3). Position 4 is a phosphothreonine (T4). S6 is subject to Phosphoserine. T8 is subject to Phosphothreonine. The tract at residues 35–39 (EDDEE) is acidic tract A1. The segment covering 123-148 (DYSWAEEEDEGEAEGEEEEEEEEDQE) has biased composition (acidic residues). Residues 123–200 (DYSWAEEEDE…GRGRKPAAKK (78 aa)) form a disordered region. Positions 128–148 (EEEDEGEAEGEEEEEEEEDQE) are acidic tract A2. S149 is subject to Phosphoserine. Residues 153–170 (AVKRPAATKKAGQAKKKK) are compositionally biased toward basic residues. The short motif at 155–170 (KRPAATKKAGQAKKKK) is the Bipartite nuclear localization signal element. Residues 174–176 (EDE) are acidic tract A3. Residues S177, S178, and S182 each carry the phosphoserine modification. Residues 185–200 (KKGKGAGRGRKPAAKK) are compositionally biased toward basic residues. R192 carries the omega-N-methylarginine; by PRMT5; alternate modification. A Symmetric dimethylarginine; by PRMT5; alternate modification is found at R192.

It belongs to the nucleoplasmin family. In terms of assembly, homopentamer, when bound to H2A-H2B dimers only. Homodecamer of two stacked pentamers, when bound to H2A-H2B dimers and H3-H4 tetramers simultaneously. Interacts with the heterotetramer formed by wdr77 and prmt5. Activated by phosphorylation of multiple serine/threonine residues, along both core and tail domains. The level of phosphorylation gradually increases during egg maturation, reaching an average of 7-10 phosphates per monomer, so that at the time of fertilization the activity of the protein is maximum. In terms of processing, methylated by prmt5, yielding both monomethylated and symmetrically dimethylated Arg-192.

It is found in the nucleus. Acts as a chaperone for histones, such as histone H2A-H2B, and thus regulates the assembly of nucleosome cores. Involved in chromatin remodeling, especially during fertilization and early embryonic development. May be involved in sperm chromatin decondensation during fertilization. The chain is Nucleoplasmin from Xenopus laevis (African clawed frog).